Consider the following 50-residue polypeptide: Large ribosomal subunit protein bL32c (50 aa).

It belongs to the bacterial ribosomal protein bL32 family.

It localises to the plastid. The protein resides in the chloroplast. This chain is Large ribosomal subunit protein bL32c, found in Lotus japonicus (Lotus corniculatus var. japonicus).